An 88-amino-acid chain; its full sequence is Pape peptide (88 aa).

An N-terminal signal peptide occupies residues 1–22; sequence MNRKTLLVIFFVTLLIAEEVNS. Residues 23-45 constitute a propeptide that is removed on maturation; it reads FRLGGFLKKIWRSKLVKRLRSKG. The disordered stretch occupies residues 49–88; the sequence is LKEALAPEPAPEPAPEPAPEAAPEAAPEPAAAAPERRRRR. Pro residues predominate over residues 56–68; that stretch reads EPAPEPAPEPAPE. PAPE repeat units lie at residues 57 to 60, 61 to 64, and 65 to 68; these read PAPE. The segment covering 69–81 has biased composition (low complexity); sequence AAPEAAPEPAAAA.

Expressed by the venom gland.

It localises to the secreted. The polypeptide is Pape peptide (Tityus serrulatus (Brazilian scorpion)).